Consider the following 194-residue polypeptide: Pyridoxine/pyridoxamine 5'-phosphate oxidase (194 aa).

FMN-binding positions include 42–47 (RVVLLK), 57–58 (FT), Arg63, Lys64, and Gln86. Lys47 provides a ligand contact to substrate. Substrate contacts are provided by Tyr104, Arg108, and Ser112. FMN contacts are provided by residues 121 to 122 (QS) and Trp166. 172–174 (RIH) contacts substrate. An FMN-binding site is contributed by Arg176.

The protein belongs to the pyridoxamine 5'-phosphate oxidase family. As to quaternary structure, homodimer. FMN is required as a cofactor.

The catalysed reaction is pyridoxamine 5'-phosphate + O2 + H2O = pyridoxal 5'-phosphate + H2O2 + NH4(+). It carries out the reaction pyridoxine 5'-phosphate + O2 = pyridoxal 5'-phosphate + H2O2. Its pathway is cofactor metabolism; pyridoxal 5'-phosphate salvage; pyridoxal 5'-phosphate from pyridoxamine 5'-phosphate: step 1/1. The protein operates within cofactor metabolism; pyridoxal 5'-phosphate salvage; pyridoxal 5'-phosphate from pyridoxine 5'-phosphate: step 1/1. Catalyzes the oxidation of either pyridoxine 5'-phosphate (PNP) or pyridoxamine 5'-phosphate (PMP) into pyridoxal 5'-phosphate (PLP). This Ehrlichia ruminantium (strain Welgevonden) protein is Pyridoxine/pyridoxamine 5'-phosphate oxidase.